Here is a 317-residue protein sequence, read N- to C-terminus: uncharacterized protein (317 aa).

The first 16 residues, 1 to 16, serve as a signal peptide directing secretion; that stretch reads MKLSFILSTLVAGALA. The N-linked (GlcNAc...) asparagine glycan is linked to asparagine 42. Composition is skewed to low complexity over residues 150-238 and 247-259; these read SSST…SSSS and TAST…ASSA. Residues 150–259 are disordered; it reads SSSTPSSSSS…TDDSSSASSA (110 aa).

This is an uncharacterized protein from Schizosaccharomyces pombe (strain 972 / ATCC 24843) (Fission yeast).